Here is a 91-residue protein sequence, read N- to C-terminus: Small ribosomal subunit protein bS16c (91 aa).

Belongs to the bacterial ribosomal protein bS16 family.

The protein localises to the plastid. The protein resides in the chloroplast. This Pelargonium hortorum (Common geranium) protein is Small ribosomal subunit protein bS16c.